Here is a 115-residue protein sequence, read N- to C-terminus: Large ribosomal subunit protein bL19 (115 aa).

The protein belongs to the bacterial ribosomal protein bL19 family.

This protein is located at the 30S-50S ribosomal subunit interface and may play a role in the structure and function of the aminoacyl-tRNA binding site. The polypeptide is Large ribosomal subunit protein bL19 (Francisella tularensis subsp. mediasiatica (strain FSC147)).